Reading from the N-terminus, the 92-residue chain is Small ribosomal subunit protein uS19c (92 aa).

The protein belongs to the universal ribosomal protein uS19 family.

The protein localises to the plastid. It is found in the chloroplast. Functionally, protein S19 forms a complex with S13 that binds strongly to the 16S ribosomal RNA. In Daucus carota (Wild carrot), this protein is Small ribosomal subunit protein uS19c.